The chain runs to 201 residues: Small ribosomal subunit protein uS4c (201 aa).

The disordered stretch occupies residues 19-38; the sequence is PGLTSKSPKAGSDLRNQLRS. The region spanning 89 to 149 is the S4 RNA-binding domain; it reads MRLDNILFRL…DEQKSRALIQ (61 aa).

The protein belongs to the universal ribosomal protein uS4 family. In terms of assembly, part of the 30S ribosomal subunit. Contacts protein S5. The interaction surface between S4 and S5 is involved in control of translational fidelity.

It localises to the plastid. Its subcellular location is the chloroplast. Its function is as follows. One of the primary rRNA binding proteins, it binds directly to 16S rRNA where it nucleates assembly of the body of the 30S subunit. With S5 and S12 plays an important role in translational accuracy. This chain is Small ribosomal subunit protein uS4c (rps4), found in Platanus occidentalis (Sycamore).